The chain runs to 199 residues: Glycerol-3-phosphate acyltransferase (199 aa).

5 helical membrane passes run isoleucine 3 to valine 23, valine 55 to isoleucine 75, phenylalanine 79 to leucine 99, valine 113 to phenylalanine 133, and tyrosine 155 to isoleucine 175.

It belongs to the PlsY family. In terms of assembly, probably interacts with PlsX.

Its subcellular location is the cell inner membrane. The catalysed reaction is an acyl phosphate + sn-glycerol 3-phosphate = a 1-acyl-sn-glycero-3-phosphate + phosphate. It participates in lipid metabolism; phospholipid metabolism. Catalyzes the transfer of an acyl group from acyl-phosphate (acyl-PO(4)) to glycerol-3-phosphate (G3P) to form lysophosphatidic acid (LPA). This enzyme utilizes acyl-phosphate as fatty acyl donor, but not acyl-CoA or acyl-ACP. The sequence is that of Glycerol-3-phosphate acyltransferase from Endomicrobium trichonymphae.